A 466-amino-acid polypeptide reads, in one-letter code: tRNA dimethylallyltransferase 2 (466 aa).

27-34 (GPTGSGKS) is a binding site for ATP. Residue 29–34 (TGSGKS) coordinates substrate. Residues 52-55 (DAMQ) form an interaction with substrate tRNA region. Residues 433-466 (WEHHKQGRTHRKRTTRHKNSQTYKNREVQEAEVN) are disordered. The segment covering 437-451 (KQGRTHRKRTTRHKN) has biased composition (basic residues). The span at 456-466 (KNREVQEAEVN) shows a compositional bias: basic and acidic residues.

The protein belongs to the IPP transferase family. The cofactor is Mg(2+). As to expression, expressed ubiquitously, with highest expression in proliferating tissues.

It localises to the cytoplasm. The enzyme catalyses adenosine(37) in tRNA + dimethylallyl diphosphate = N(6)-dimethylallyladenosine(37) in tRNA + diphosphate. Catalyzes the transfer of a dimethylallyl group onto the adenine at position 37 in tRNAs that read codons beginning with uridine, leading to the formation of N6-(dimethylallyl)adenosine (i(6)A). Involved in the cis-type cytokinin biosynthesis. The protein is tRNA dimethylallyltransferase 2 (IPT2) of Arabidopsis thaliana (Mouse-ear cress).